The following is a 424-amino-acid chain: T-DNA border endonuclease VirD2 (424 aa).

2 disordered regions span residues 206–269 (AQKI…GSSI) and 321–424 (RPVT…RGGT). Positions 212–221 (EDTDFDETSP) are enriched in acidic residues. Positions 243–261 (EPDRATRHDKQPLEQHARF) are enriched in basic and acidic residues. Residues 330-339 (TVKRQQRSKR) are compositionally biased toward basic residues. Basic and acidic residues-rich tracts occupy residues 394–408 (SPKR…ELGG) and 415–424 (NRRDDGRGGT).

In terms of biological role, tumor formation by A.tumefaciens involves the transfer and integration of a defined segment (T-DNA) of Ti plasmid DNA into the plant nuclear genome. The virD operon encodes a site-specific endonuclease that cleaves at a unique site within both 24 bp direct repeats flanking the T-DNA. This chain is T-DNA border endonuclease VirD2 (virD2), found in Rhizobium radiobacter (Agrobacterium tumefaciens).